A 336-amino-acid polypeptide reads, in one-letter code: Phosphate acyltransferase (336 aa).

The protein belongs to the PlsX family. As to quaternary structure, homodimer. Probably interacts with PlsY.

The protein localises to the cytoplasm. It carries out the reaction a fatty acyl-[ACP] + phosphate = an acyl phosphate + holo-[ACP]. It participates in lipid metabolism; phospholipid metabolism. Catalyzes the reversible formation of acyl-phosphate (acyl-PO(4)) from acyl-[acyl-carrier-protein] (acyl-ACP). This enzyme utilizes acyl-ACP as fatty acyl donor, but not acyl-CoA. The chain is Phosphate acyltransferase from Ectopseudomonas mendocina (strain ymp) (Pseudomonas mendocina).